The chain runs to 323 residues: Beta-ketoacyl-[acyl-carrier-protein] synthase III (323 aa).

Catalysis depends on residues cysteine 113 and histidine 250. The segment at 251–255 (QANKR) is ACP-binding. The active site involves asparagine 280.

This sequence belongs to the thiolase-like superfamily. FabH family. Homodimer.

It localises to the cytoplasm. It carries out the reaction malonyl-[ACP] + acetyl-CoA + H(+) = 3-oxobutanoyl-[ACP] + CO2 + CoA. Its pathway is lipid metabolism; fatty acid biosynthesis. Its function is as follows. Catalyzes the condensation reaction of fatty acid synthesis by the addition to an acyl acceptor of two carbons from malonyl-ACP. Catalyzes the first condensation reaction which initiates fatty acid synthesis and may therefore play a role in governing the total rate of fatty acid production. Possesses both acetoacetyl-ACP synthase and acetyl transacylase activities. Its substrate specificity determines the biosynthesis of branched-chain and/or straight-chain of fatty acids. This is Beta-ketoacyl-[acyl-carrier-protein] synthase III from Agrobacterium fabrum (strain C58 / ATCC 33970) (Agrobacterium tumefaciens (strain C58)).